The sequence spans 434 residues: Oxysterol-binding protein homolog 4 (434 aa).

Residues 7–29 (SSSWTSFLKSIASFNGDLSSLSA) are ALPS motif. The OSBP-related domain (ORD) stretch occupies residues 16-366 (SIASFNGDLS…WQRRWFKDFD (351 aa)). 24–29 (LSSLSA) lines the a 1,2-diacyl-sn-glycero-3-phospho-(1D-myo-inositol 4-phosphate) pocket. Residue glutamine 96 coordinates 20-hydroxycholesterol. Glutamine 96 provides a ligand contact to 25-hydroxycholesterol. 7beta-hydroxycholesterol-binding residues include glutamine 96 and arginine 100. Residue glutamine 96 participates in cholesterol binding. Glutamine 96 provides a ligand contact to ergosterol. A 1,2-diacyl-sn-glycero-3-phospho-(1D-myo-inositol 4-phosphate)-binding positions include 109–112 (KPLN), 143–144 (HH), lysine 336, glutamate 340, and arginine 344. Threonine 370 bears the Phosphothreonine mark. Serine 389 bears the Phosphoserine mark.

It belongs to the OSBP family.

It is found in the cytoplasm. The protein resides in the golgi apparatus membrane. Functionally, lipid transport protein (LTP) involved in non-vesicular transfer of lipids between membranes. Functions in phosphoinositide-coupled directional transport of various lipids by carrying the lipid molecule in a hydrophobic pocket and transferring it between membranes through the cytosol. Involved in maintenance of intracellular sterol distribution and homeostasis. Involved in lipid countertransport between the Golgi complex and membranes of the endoplasmic reticulum. Specifically exchanges sterol with phosphatidylinositol 4-phosphate (PI4P), delivering sterol to the Golgi in exchange for PI4P, which is delivered to the ER-localized PI4P phosphatase SAC1 for degradation. Thus, by maintaining a PI4P gradient at the ER/Golgi interface, SAC1 may drive PS transport. Displays a similar affinity for PI4P and sterols. Binds sterol and PI4P in a mutually exclusive manner. Involved in ergosterol transport from the plasma membrane (PM) to the ER. Mediates sterol transport from the ER to mitochondria. Involved in the negative regulation of Golgi-derived transport vesicle biogenesis. Plays a role in the positive regulation of vesicular transport of ceramide from the ER to the Golgi, negatively regulating COPII-mediated ER export of cargos. The sequence is that of Oxysterol-binding protein homolog 4 from Saccharomyces cerevisiae (strain ATCC 204508 / S288c) (Baker's yeast).